A 445-amino-acid polypeptide reads, in one-letter code: Dolichyl-diphosphooligosaccharide--protein glycosyltransferase 48 kDa subunit (445 aa).

An N-terminal signal peptide occupies residues 1–32 (MRRRRKMEAGAAARAWSLLWLLLPLLGPVCAS). Residues 33–415 (GPRTLVLLDN…QYERFIPSAY (383 aa)) lie on the Lumenal side of the membrane. A helical membrane pass occupies residues 416-436 (PYYASAFSMMLGLFIFSTVFL). Residues 437–445 (HMKEKEKSD) are Cytoplasmic-facing.

Belongs to the DDOST 48 kDa subunit family. Component of the oligosaccharyltransferase (OST) complex. OST exists in two different complex forms which contain common core subunits RPN1, RPN2, OST48, OST4, DAD1 and TMEM258, either STT3A or STT3B as catalytic subunits, and form-specific accessory subunits. STT3A complex assembly occurs through the formation of 3 subcomplexes. Subcomplex 1 contains RPN1 and TMEM258, subcomplex 2 contains the STT3A-specific subunits STT3A, DC2/OSTC, and KCP2 as well as the core subunit OST4, and subcomplex 3 contains RPN2, DAD1, and OST48. The STT3A complex can form stable complexes with the Sec61 complex or with both the Sec61 and TRAP complexes. Interacts with SMIM22.

It localises to the endoplasmic reticulum. Its subcellular location is the endoplasmic reticulum membrane. Its pathway is protein modification; protein glycosylation. Functionally, subunit of the oligosaccharyl transferase (OST) complex that catalyzes the initial transfer of a defined glycan (Glc(3)Man(9)GlcNAc(2) in eukaryotes) from the lipid carrier dolichol-pyrophosphate to an asparagine residue within an Asn-X-Ser/Thr consensus motif in nascent polypeptide chains, the first step in protein N-glycosylation. N-glycosylation occurs cotranslationally and the complex associates with the Sec61 complex at the channel-forming translocon complex that mediates protein translocation across the endoplasmic reticulum (ER). All subunits are required for a maximal enzyme activity. Required for the assembly of both SST3A- and SS3B-containing OST complexes. The sequence is that of Dolichyl-diphosphooligosaccharide--protein glycosyltransferase 48 kDa subunit from Canis lupus familiaris (Dog).